A 369-amino-acid polypeptide reads, in one-letter code: Holliday junction branch migration complex subunit RuvB (369 aa).

The tract at residues 1–21 is disordered; the sequence is MHKNENNRLLGSVSLPDDPDR. The large ATPase domain (RuvB-L) stretch occupies residues 1–184; the sequence is MHKNENNRLL…FGIPIRLNFY (184 aa). ATP-binding positions include Leu23, Arg24, Gly65, Lys68, Thr69, Thr70, 131–133, Arg174, Tyr184, and Arg221; that span reads EDY. Thr69 contacts Mg(2+). The interval 185–255 is small ATPAse domain (RuvB-S); sequence TIEELEYIVK…IADTALSRLE (71 aa). Residues 258–369 form a head domain (RuvB-H) region; sequence HLGLDPLDRN…QKHLWEKDYD (112 aa). Arg294, Arg313, and Arg318 together coordinate DNA.

The protein belongs to the RuvB family. Homohexamer. Forms an RuvA(8)-RuvB(12)-Holliday junction (HJ) complex. HJ DNA is sandwiched between 2 RuvA tetramers; dsDNA enters through RuvA and exits via RuvB. An RuvB hexamer assembles on each DNA strand where it exits the tetramer. Each RuvB hexamer is contacted by two RuvA subunits (via domain III) on 2 adjacent RuvB subunits; this complex drives branch migration. In the full resolvosome a probable DNA-RuvA(4)-RuvB(12)-RuvC(2) complex forms which resolves the HJ.

Its subcellular location is the cytoplasm. The catalysed reaction is ATP + H2O = ADP + phosphate + H(+). Functionally, the RuvA-RuvB-RuvC complex processes Holliday junction (HJ) DNA during genetic recombination and DNA repair, while the RuvA-RuvB complex plays an important role in the rescue of blocked DNA replication forks via replication fork reversal (RFR). RuvA specifically binds to HJ cruciform DNA, conferring on it an open structure. The RuvB hexamer acts as an ATP-dependent pump, pulling dsDNA into and through the RuvAB complex. RuvB forms 2 homohexamers on either side of HJ DNA bound by 1 or 2 RuvA tetramers; 4 subunits per hexamer contact DNA at a time. Coordinated motions by a converter formed by DNA-disengaged RuvB subunits stimulates ATP hydrolysis and nucleotide exchange. Immobilization of the converter enables RuvB to convert the ATP-contained energy into a lever motion, pulling 2 nucleotides of DNA out of the RuvA tetramer per ATP hydrolyzed, thus driving DNA branch migration. The RuvB motors rotate together with the DNA substrate, which together with the progressing nucleotide cycle form the mechanistic basis for DNA recombination by continuous HJ branch migration. Branch migration allows RuvC to scan DNA until it finds its consensus sequence, where it cleaves and resolves cruciform DNA. The chain is Holliday junction branch migration complex subunit RuvB from Bartonella bacilliformis (strain ATCC 35685 / KC583 / Herrer 020/F12,63).